The sequence spans 778 residues: Hyperosmolality-gated Ca2+ permeable channel 1.4 (778 aa).

A run of 10 helical transmembrane segments spans residues 7-27 (IGLA…LFAI), 101-121 (IYLI…SILV), 158-178 (FWAH…VLMK), 375-395 (FVMH…IAFV), 427-447 (FLPG…LMIM), 467-487 (YYIF…SAFE), 512-532 (ATFF…GEIF), 584-604 (PVTP…YLVF), 626-646 (VHGR…GLMS), and 651-671 (VQST…HRFC). Residues 738 to 778 (VVQTKRQRSRRTTVASSNASRGSSQSTPFNQLDLGKGKPET) form a disordered region. Over residues 753–763 (SSNASRGSSQS) the composition is skewed to low complexity.

It belongs to the CSC1 (TC 1.A.17) family.

The protein resides in the membrane. Its function is as follows. Acts as an osmosensitive calcium-permeable cation channel. The protein is Hyperosmolality-gated Ca2+ permeable channel 1.4 of Arabidopsis thaliana (Mouse-ear cress).